Reading from the N-terminus, the 167-residue chain is 3-isopropylmalate dehydratase small subunit (167 aa).

This sequence belongs to the LeuD family. LeuD type 2 subfamily. Heterodimer of LeuC and LeuD.

The catalysed reaction is (2R,3S)-3-isopropylmalate = (2S)-2-isopropylmalate. It functions in the pathway amino-acid biosynthesis; L-leucine biosynthesis; L-leucine from 3-methyl-2-oxobutanoate: step 2/4. Catalyzes the isomerization between 2-isopropylmalate and 3-isopropylmalate, via the formation of 2-isopropylmaleate. The protein is 3-isopropylmalate dehydratase small subunit of Nitratidesulfovibrio vulgaris (strain ATCC 29579 / DSM 644 / CCUG 34227 / NCIMB 8303 / VKM B-1760 / Hildenborough) (Desulfovibrio vulgaris).